The primary structure comprises 688 residues: MGYSLGYIGEHWEEYRAVLYIVLLLPVLIHFLIRRKTQLSNSDKSSEKKDEVKKQREVKRFKRVGKRGKIGSPSSSIRKQNDTIDWKNSPLCVFYSTLGGTAERYAKQVHEELSSLLQRDDIQLLNLDYVDLSEYFVSCPENAIYLVVLPSYEIESSIDYYLSSLQESFSDFRVPKDPLHGLSGYAVFGLGDMENYPGDKFCYQAIQADKWIKKLGARRLAPLGVVNTQLAPTAQIDALLQWTRSVAECLKNGTLLKIGNTDSLSSDVMDVEDMGSMMAKAKAEAALPVGTKEMVSTESPTYKALTKQGYSVVGSHSGVKICRWTKSAMRGRGFCYKYSFYGIRSHLCMEATPSLACANKCTFCWRHGTNPVGTSWRWKVDPPEMILQGILKAHYAKLKLMKGVPGVLPDRYEEASRVRHCALSLVGEPIFYPYINEFVSMLHEREISSFLVTNAQHPEALRNMGMVTQLYVSVDASTKQSLKSVDRPLFKDFWERMLTCLEILREKRQRTVYRMTLVKGFNMEQIKEYTELIRLGVPCFIEVKGVTYSGNSDQSPLTMKNVPYYEEVIDFVKKLIEYIDIHLQDLGVRYEIAAEHAHSCSILVAQTAFKKDGHWHTHIDYPKFFELIRTKKDFGPFDYMASTPDFAMFGNGGFSPEDTRFHRKKKTQTSKPISATISETATISEAAA.

Residues 91–247 form the Flavodoxin-like domain; sequence LCVFYSTLGG…ALLQWTRSVA (157 aa). FMN is bound by residues 97-101 and 187-221; these read TLGGT and VFGL…RRLA. The 240-residue stretch at 341–580 folds into the Radical SAM core domain; the sequence is YGIRSHLCME…FVKKLIEYID (240 aa). The [4Fe-4S] cluster site is built by cysteine 357, cysteine 361, and cysteine 364.

The protein belongs to the TYW1 family. It depends on [4Fe-4S] cluster as a cofactor.

The enzyme catalyses N(1)-methylguanosine(37) in tRNA(Phe) + pyruvate + S-adenosyl-L-methionine = 4-demethylwyosine(37) in tRNA(Phe) + 5'-deoxyadenosine + L-methionine + CO2 + H2O. Its pathway is tRNA modification; wybutosine-tRNA(Phe) biosynthesis. In terms of biological role, probable component of the wybutosine biosynthesis pathway. Wybutosine is a hyper modified guanosine with a tricyclic base found at the 3'-position adjacent to the anticodon of eukaryotic phenylalanine tRNA. Catalyzes the condensation of N-methylguanine with 2 carbon atoms from pyruvate to form the tricyclic 4-demethylwyosine, an intermediate in wybutosine biosynthesis. The polypeptide is S-adenosyl-L-methionine-dependent tRNA 4-demethylwyosine synthase (tyw1) (Schizosaccharomyces pombe (strain 972 / ATCC 24843) (Fission yeast)).